The primary structure comprises 896 residues: Androgen receptor (896 aa).

The modulating stretch occupies residues 1–534; that stretch reads MEVQLGLGRV…PIDYYFPPQK (534 aa). Residues 1–563 form an interaction with ZNF318 region; it reads MEVQLGLGRV…GSCKVFFKRA (563 aa). 2 disordered regions span residues 35–152 and 178–218; these read QNPG…LSLL and LLQQ…YLGG. The span at 54–78 shows a compositional bias: low complexity; sequence LQQQQLQQQETSPRRQQQQQQQPSE. Ser65 carries the phosphoserine; by CDK9 modification. Ser81 is subject to Phosphoserine. Positions 178–189 are enriched in low complexity; the sequence is LLQQQQQQQQQQ. Positions 190 to 199 are enriched in polar residues; the sequence is EAVSEGNSSG. Tyr215 is subject to Phosphotyrosine; by CSK. Residue Ser248 is modified to Phosphoserine. Position 259 is a phosphotyrosine; by CSK and TNK2 (Tyr259). Phosphotyrosine; by CSK is present on residues Tyr299, Tyr338, Tyr349, and Tyr354. Tyr355 carries the post-translational modification Phosphotyrosine; by CSK and TNK2. Lys378 is covalently cross-linked (Glycyl lysine isopeptide (Lys-Gly) (interchain with G-Cter in SUMO)). At Tyr385 the chain carries Phosphotyrosine; by CSK. Residue Lys497 forms a Glycyl lysine isopeptide (Lys-Gly) (interchain with G-Cter in SUMO) linkage. Tyr511 and Tyr528 each carry phosphotyrosine; by CSK. An interaction with LPXN region spans residues 528-895; that stretch reads YYFPPQKTCL…GKVKPIYFHT (368 aa). Positions 535-608 form a DNA-binding region, nuclear receptor; sequence TCLICGDEAS…AGMTLGARKL (74 aa). 2 consecutive NR C4-type zinc fingers follow at residues 536 to 556 and 572 to 596; these read CLIC…CGSC and CASR…LRKC. The interaction with HIPK3 stretch occupies residues 548 to 638; sequence YGALTCGSCK…TEEPAQKLTV (91 aa). Residues 568-895 form an interaction with CCAR1 region; the sequence is QKYLCASRND…GKVKPIYFHT (328 aa). The interval 601-895 is interaction with KAT7; that stretch reads MTLGARKLKK…GKVKPIYFHT (295 aa). Residue Ser627 is modified to Phosphoserine; by STK4/MST1. Residues 645-876 form the NR LBD domain; sequence ECQPIFLNVL…DFPEMMAEII (232 aa). 17beta-hydroxy-5alpha-androstan-3-one-binding residues include Asn682 and Arg729. Glycyl lysine isopeptide (Lys-Gly) (interchain with G-Cter in ubiquitin) cross-links involve residues Lys822 and Lys824. Thr854 contacts 17beta-hydroxy-5alpha-androstan-3-one. Tyr892 is modified (phosphotyrosine; by CSK).

Belongs to the nuclear hormone receptor family. NR3 subfamily. Binds DNA as a homodimer. Part of a ternary complex containing AR, EFCAB6/DJBP and PARK7. Interacts with HIPK3 and NR0B2 in the presence of androgen. The ligand binding domain interacts with KAT7/HBO1 in the presence of dihydrotestosterone. Interacts with EFCAB6/DJBP, PQBP1, RANBP9, RBAK, SPDEF, SRA1, TGFB1I1 and RREB1. Interacts with ZMIZ1/ZIMP10 and ZMIZ2/ZMIP7 which both enhance its transactivation activity. Interacts with SLC30A9 and RAD54L2/ARIP4. Interacts with MACROD1 (via macro domain). Interacts via the ligand-binding domain with LXXLL and FXXLF motifs from NCOA1, NCOA2, NCOA3 and MAGEA11. Interacts (via nuclear receptor DNA binding domain and nuclear receptor ligand binding domain) with NCOA4. The AR N-terminal poly-Gln region binds Ran resulting in enhancement of AR-mediated transactivation. Ran-binding decreases as the poly-Gln length increases. Interacts with HIP1 (via coiled coil domain). Interacts (via ligand-binding domain) with TRIM68. Interacts with TNK2. Interacts with USP26. Interacts with RNF6. Interacts (regulated by RNF6 probably through polyubiquitination) with RNF14; regulates AR transcriptional activity. Interacts with PRMT2 and TRIM24. Interacts with RACK1. Interacts with RANBP10; this interaction enhances dihydrotestosterone-induced AR transcriptional activity. Interacts with PRPF6 in a hormone-independent way; this interaction enhances dihydrotestosterone-induced AR transcriptional activity. Interacts with STK4/MST1. Interacts with ZIPK/DAPK3. Interacts with LPXN. Interacts with MAK. Part of a complex containing AR, MAK and NCOA3. Interacts with CRY1. Interacts with CCAR1 and GATA2. Interacts with ZNF318. Interacts with BUD31. Interacts with ARID4A. Interacts with ARID4B. Interacts (via NR LBD domain) with ZBTB7A; the interaction is direct and androgen-dependent. Interacts with NCOR1. Interacts with NCOR2. Interacts with CRY2 in a ligand-dependent manner. Post-translationally, phosphorylated in prostate cancer cells in response to several growth factors including EGF. Phosphorylation is induced by c-Src kinase (CSK). Tyr-511 is one of the major phosphorylation sites and an increase in phosphorylation and Src kinase activity is associated with prostate cancer progression. Phosphorylation by TNK2 enhances the DNA-binding and transcriptional activity. Phosphorylation at Ser-65 by CDK9 regulates AR promoter selectivity and cell growth. Sumoylated on Lys-378 (major) and Lys-497. Ubiquitinated. Deubiquitinated by USP26. 'Lys-6' and 'Lys-27'-linked polyubiquitination by RNF6 modulates AR transcriptional activity and specificity. In terms of processing, palmitoylated by ZDHHC7 and ZDHHC21. Palmitoylation is required for plasma membrane targeting and for rapid intracellular signaling via ERK and AKT kinases and cAMP generation.

It localises to the nucleus. The protein resides in the cytoplasm. Functionally, steroid hormone receptors are ligand-activated transcription factors that regulate eukaryotic gene expression and affect cellular proliferation and differentiation in target tissues. Transcription factor activity is modulated by bound coactivator and corepressor proteins like ZBTB7A that recruits NCOR1 and NCOR2 to the androgen response elements/ARE on target genes, negatively regulating androgen receptor signaling and androgen-induced cell proliferation. Transcription activation is also down-regulated by NR0B2. Activated, but not phosphorylated, by HIPK3 and ZIPK/DAPK3. In Sus scrofa (Pig), this protein is Androgen receptor (AR).